Here is a 335-residue protein sequence, read N- to C-terminus: NADH-quinone oxidoreductase subunit H (335 aa).

8 helical membrane-spanning segments follow: residues 11-31 (VIISVVKAIVILLAVVVAGAL), 81-101 (VIFTLAPVVAMSALLIAFAVI), 114-134 (IGLLFFFAMAGLSVYAVLFAG), 154-174 (VSYEVFMGLALMGIVVQVGSF), 187-207 (LWFIIPQFFGFCTFFIAGVAV), 238-258 (FFVGEYIGIILISALLVTLFF), 270-290 (QLAFFWFFLKTAFFIMLFILL), and 309-329 (FCLPLTLINLLVTAAVVLLNT).

Belongs to the complex I subunit 1 family. In terms of assembly, NDH-1 is composed of 13 different subunits. Subunits NuoA, H, J, K, L, M, N constitute the membrane sector of the complex.

It is found in the cell inner membrane. It carries out the reaction a quinone + NADH + 5 H(+)(in) = a quinol + NAD(+) + 4 H(+)(out). NDH-1 shuttles electrons from NADH, via FMN and iron-sulfur (Fe-S) centers, to quinones in the respiratory chain. The immediate electron acceptor for the enzyme in this species is believed to be ubiquinone. Couples the redox reaction to proton translocation (for every two electrons transferred, four hydrogen ions are translocated across the cytoplasmic membrane), and thus conserves the redox energy in a proton gradient. This subunit may bind ubiquinone. The polypeptide is NADH-quinone oxidoreductase subunit H (Pseudomonas fluorescens (strain SBW25)).